A 423-amino-acid polypeptide reads, in one-letter code: MTPAEEMARLGAQAKDAARAMTRATPEAKNQALLGLAQLLHQREPEILAANARDIEAARAAGQDAARLDRLTLTSAIMEEMRAACAHVANLPDPVGATESQWQRPNGLLVGKMRIPLGVIAMVYEARPNVTIDAAILCIKAGNAVILRGGSEAIHSNTALAQTLQEAMVQAGLPASAAQLVTVPGHEAVNALCKLDQYIDVIIPRGGERLVRAVTEAATMPVLKHFKGVCHAYIEPDADLERALDIVFNGKVQRPGVCNALECLLVHKDAASAFLPLVAEKLGAAGVEFRADTTALPLMNKAPQGRVVPQRAEDLGQEFHDLVLAVRVVDSMDEALDHIARYGSNHTEIICTNDYAKAMRFLREADASMVAVNASSRFNDGGQLGLGAEIGISTSKLHAYGAMGVEELTTTKFVVLGQGQVRQ.

It belongs to the gamma-glutamyl phosphate reductase family.

Its subcellular location is the cytoplasm. It carries out the reaction L-glutamate 5-semialdehyde + phosphate + NADP(+) = L-glutamyl 5-phosphate + NADPH + H(+). Its pathway is amino-acid biosynthesis; L-proline biosynthesis; L-glutamate 5-semialdehyde from L-glutamate: step 2/2. Catalyzes the NADPH-dependent reduction of L-glutamate 5-phosphate into L-glutamate 5-semialdehyde and phosphate. The product spontaneously undergoes cyclization to form 1-pyrroline-5-carboxylate. This chain is Gamma-glutamyl phosphate reductase, found in Desulfovibrio desulfuricans (strain ATCC 27774 / DSM 6949 / MB).